The sequence spans 218 residues: MQRARCYLIGETAVVLELEPPVTLASQKRIWRLAQRLVDMPNVVEAIPGMNNITVILRNPESLALDAIERLQRWWEESEALEPESRFIEIPVVYGGAGGPDLAVVAAHCGLSEKQVVELHSSVEYVVWFLGFQPGFPYLGSLPEQLHTPRRAEPRLLVPAGSVGIGGPQTGVYPLATPGGWQLIGHTSLSLFDPARDEPILLRPGDSVRFVPQKEGVC.

The protein belongs to the PxpB family. In terms of assembly, forms a complex composed of PxpA, PxpB and PxpC.

It carries out the reaction 5-oxo-L-proline + ATP + 2 H2O = L-glutamate + ADP + phosphate + H(+). Functionally, catalyzes the cleavage of 5-oxoproline to form L-glutamate coupled to the hydrolysis of ATP to ADP and inorganic phosphate. The polypeptide is 5-oxoprolinase subunit B (Escherichia coli O157:H7).